The following is a 144-amino-acid chain: Cytochrome c oxidase subunit 4 isoform 1, mitochondrial (144 aa).

The Mitochondrial matrix segment spans residues 1-73 (SVVKSEDFSL…SFAEMNRGSN (73 aa)). Lys4 is subject to N6-acetyllysine; alternate. Lys4 is subject to N6-succinyllysine; alternate. Lys28 carries the N6-acetyllysine modification. A phosphoserine mark is found at Ser31 and Ser33. Lys35 carries the N6-acetyllysine; alternate modification. Residue Lys35 is modified to N6-succinyllysine; alternate. An N6-acetyllysine modification is found at Lys42. A helical transmembrane segment spans residues 74-99 (EWKTVVGGAMFFIGFTALIIMWQKRH). At 100–144 (VYGPLPQSFDKEWVAKQTKRMLDMKVNPIQGLASKWDYEKNEWKK) the chain is on the mitochondrial intermembrane side.

This sequence belongs to the cytochrome c oxidase IV family. Component of the cytochrome c oxidase (complex IV, CIV), a multisubunit enzyme composed of 14 subunits. The complex is composed of a catalytic core of 3 subunits MT-CO1, MT-CO2 and MT-CO3, encoded in the mitochondrial DNA, and 11 supernumerary subunits COX4I, COX5A, COX5B, COX6A, COX6B, COX6C, COX7A, COX7B, COX7C, COX8 and NDUFA4, which are encoded in the nuclear genome. The complex exists as a monomer or a dimer and forms supercomplexes (SCs) in the inner mitochondrial membrane with NADH-ubiquinone oxidoreductase (complex I, CI) and ubiquinol-cytochrome c oxidoreductase (cytochrome b-c1 complex, complex III, CIII), resulting in different assemblies (supercomplex SCI(1)III(2)IV(1) and megacomplex MCI(2)III(2)IV(2)). Interacts with PHB2; the interaction decreases in absence of SPHK2. Interacts with AFG1L. Interacts with ABCB7; this interaction allows the regulation of cellular iron homeostasis and cellular reactive oxygen species (ROS) levels in cardiomyocytes. Interacts with FLVCR2; this interaction occurs in the absence of heme and is disrupted upon heme binding. Interacts with IRGC.

Its subcellular location is the mitochondrion inner membrane. Its pathway is energy metabolism; oxidative phosphorylation. Its function is as follows. Component of the cytochrome c oxidase, the last enzyme in the mitochondrial electron transport chain which drives oxidative phosphorylation. The respiratory chain contains 3 multisubunit complexes succinate dehydrogenase (complex II, CII), ubiquinol-cytochrome c oxidoreductase (cytochrome b-c1 complex, complex III, CIII) and cytochrome c oxidase (complex IV, CIV), that cooperate to transfer electrons derived from NADH and succinate to molecular oxygen, creating an electrochemical gradient over the inner membrane that drives transmembrane transport and the ATP synthase. Cytochrome c oxidase is the component of the respiratory chain that catalyzes the reduction of oxygen to water. Electrons originating from reduced cytochrome c in the intermembrane space (IMS) are transferred via the dinuclear copper A center (CU(A)) of subunit 2 and heme A of subunit 1 to the active site in subunit 1, a binuclear center (BNC) formed by heme A3 and copper B (CU(B)). The BNC reduces molecular oxygen to 2 water molecules using 4 electrons from cytochrome c in the IMS and 4 protons from the mitochondrial matrix. This Pongo pygmaeus (Bornean orangutan) protein is Cytochrome c oxidase subunit 4 isoform 1, mitochondrial (COX4I1).